Consider the following 499-residue polypeptide: Lysine--tRNA ligase (499 aa).

Mg(2+)-binding residues include E408 and E415.

This sequence belongs to the class-II aminoacyl-tRNA synthetase family. As to quaternary structure, homodimer. Mg(2+) is required as a cofactor.

It is found in the cytoplasm. It carries out the reaction tRNA(Lys) + L-lysine + ATP = L-lysyl-tRNA(Lys) + AMP + diphosphate. The polypeptide is Lysine--tRNA ligase (Thermoanaerobacter sp. (strain X514)).